Here is a 150-residue protein sequence, read N- to C-terminus: uncharacterized protein (150 aa).

Residues 4 to 148 enclose the Flavodoxin-like domain; it reads LILYKSIHHK…KAKEFAKSIL (145 aa).

This is an uncharacterized protein from Methanocaldococcus jannaschii (strain ATCC 43067 / DSM 2661 / JAL-1 / JCM 10045 / NBRC 100440) (Methanococcus jannaschii).